A 133-amino-acid chain; its full sequence is MAEKITQYLGTGRRKTSVARVRLIPGGQGVEINGKAMDEYFGGRAILSRIVEQPLALTETLNKFAVKVNVVGGGNSGQAGAIRHGVARALLLADESLKEALREAGFLTRDSRMVERKKYGKKKARRSPQFSKR.

The disordered stretch occupies residues 114–133 (VERKKYGKKKARRSPQFSKR). Basic residues predominate over residues 118–133 (KYGKKKARRSPQFSKR).

Belongs to the universal ribosomal protein uS9 family.

In Fusobacterium nucleatum subsp. nucleatum (strain ATCC 25586 / DSM 15643 / BCRC 10681 / CIP 101130 / JCM 8532 / KCTC 2640 / LMG 13131 / VPI 4355), this protein is Small ribosomal subunit protein uS9.